Here is a 127-residue protein sequence, read N- to C-terminus: Holo-[acyl-carrier-protein] synthase (127 aa).

Mg(2+)-binding residues include Asp-9 and Glu-58.

The protein belongs to the P-Pant transferase superfamily. AcpS family. Mg(2+) is required as a cofactor.

It localises to the cytoplasm. It carries out the reaction apo-[ACP] + CoA = holo-[ACP] + adenosine 3',5'-bisphosphate + H(+). Its function is as follows. Transfers the 4'-phosphopantetheine moiety from coenzyme A to a Ser of acyl-carrier-protein. The protein is Holo-[acyl-carrier-protein] synthase of Shewanella baltica (strain OS185).